A 271-amino-acid chain; its full sequence is 4-hydroxy-tetrahydrodipicolinate reductase (271 aa).

Residues Gly-10–Met-15, Glu-36, Gly-100–Thr-102, and Ser-124–Met-127 contribute to the NAD(+) site. The Proton donor/acceptor role is filled by His-157. Position 158 (His-158) interacts with (S)-2,3,4,5-tetrahydrodipicolinate. The active-site Proton donor is the Lys-161. Gly-167–Thr-168 provides a ligand contact to (S)-2,3,4,5-tetrahydrodipicolinate.

It belongs to the DapB family.

The protein localises to the cytoplasm. The catalysed reaction is (S)-2,3,4,5-tetrahydrodipicolinate + NAD(+) + H2O = (2S,4S)-4-hydroxy-2,3,4,5-tetrahydrodipicolinate + NADH + H(+). It carries out the reaction (S)-2,3,4,5-tetrahydrodipicolinate + NADP(+) + H2O = (2S,4S)-4-hydroxy-2,3,4,5-tetrahydrodipicolinate + NADPH + H(+). It participates in amino-acid biosynthesis; L-lysine biosynthesis via DAP pathway; (S)-tetrahydrodipicolinate from L-aspartate: step 4/4. Functionally, catalyzes the conversion of 4-hydroxy-tetrahydrodipicolinate (HTPA) to tetrahydrodipicolinate. This is 4-hydroxy-tetrahydrodipicolinate reductase from Rhodopseudomonas palustris (strain BisB5).